A 338-amino-acid chain; its full sequence is MVQITKGKFDGLQRLSNDKGVIAALAIDQRGSLKKMIQQAKGTENKKDVEDFKQLVSEELTPYASAILLDLEYGTPAIKARHEGSGLLTSYEKTGYDATTPGKLPDLIEDLSALRIKENGGDAVKILVYYDPDEPAEINEIKYAFLERIGAECRAVDIPFFLEPITYDAKVTDSGSLEYAKLKPAKVKASIKEFSKPRYGVDVLKLEVPVNFKYVEGFAEGEVAYTQDEAARHFEECSDLSPLPFIYLSAGVTSEMFHKTIQFANQHNVQYSGVLCGRATWADGIEVYGKQGDDALREWLRTQGKENITSLDKLLDEGAVPWWTKYGSFEDVHVVEKQ.

Belongs to the aldolase LacD family.

It catalyses the reaction D-tagatofuranose 1,6-bisphosphate = D-glyceraldehyde 3-phosphate + dihydroxyacetone phosphate. Its pathway is carbohydrate metabolism; D-tagatose 6-phosphate degradation; D-glyceraldehyde 3-phosphate and glycerone phosphate from D-tagatose 6-phosphate: step 2/2. This is Tagatose 1,6-diphosphate aldolase from Listeria innocua serovar 6a (strain ATCC BAA-680 / CLIP 11262).